The sequence spans 430 residues: Serine--tRNA ligase (430 aa).

Residue 237–239 (TAE) coordinates L-serine. Residue 268 to 270 (RSE) participates in ATP binding. Position 291 (Glu-291) interacts with L-serine. 355–358 (EISS) provides a ligand contact to ATP. An L-serine-binding site is contributed by Ser-391.

This sequence belongs to the class-II aminoacyl-tRNA synthetase family. Type-1 seryl-tRNA synthetase subfamily. As to quaternary structure, homodimer. The tRNA molecule binds across the dimer.

The protein resides in the cytoplasm. The catalysed reaction is tRNA(Ser) + L-serine + ATP = L-seryl-tRNA(Ser) + AMP + diphosphate + H(+). The enzyme catalyses tRNA(Sec) + L-serine + ATP = L-seryl-tRNA(Sec) + AMP + diphosphate + H(+). It functions in the pathway aminoacyl-tRNA biosynthesis; selenocysteinyl-tRNA(Sec) biosynthesis; L-seryl-tRNA(Sec) from L-serine and tRNA(Sec): step 1/1. Its function is as follows. Catalyzes the attachment of serine to tRNA(Ser). Is also able to aminoacylate tRNA(Sec) with serine, to form the misacylated tRNA L-seryl-tRNA(Sec), which will be further converted into selenocysteinyl-tRNA(Sec). The sequence is that of Serine--tRNA ligase from Citrobacter koseri (strain ATCC BAA-895 / CDC 4225-83 / SGSC4696).